Consider the following 113-residue polypeptide: UPF0342 protein SMU_782 (113 aa).

This sequence belongs to the UPF0342 family.

The polypeptide is UPF0342 protein SMU_782 (Streptococcus mutans serotype c (strain ATCC 700610 / UA159)).